The following is a 252-amino-acid chain: Enolase-phosphatase E1 (252 aa).

Asp14 and Glu16 together coordinate Mg(2+). Substrate contacts are provided by residues 143-144 (SS) and Lys177. Asp202 contacts Mg(2+).

Belongs to the HAD-like hydrolase superfamily. MasA/MtnC family. In terms of assembly, monomer. Mg(2+) is required as a cofactor.

It localises to the cytoplasm. It is found in the nucleus. It catalyses the reaction 5-methylsulfanyl-2,3-dioxopentyl phosphate + H2O = 1,2-dihydroxy-5-(methylsulfanyl)pent-1-en-3-one + phosphate. The protein operates within amino-acid biosynthesis; L-methionine biosynthesis via salvage pathway; L-methionine from S-methyl-5-thio-alpha-D-ribose 1-phosphate: step 3/6. It participates in amino-acid biosynthesis; L-methionine biosynthesis via salvage pathway; L-methionine from S-methyl-5-thio-alpha-D-ribose 1-phosphate: step 4/6. Bifunctional enzyme that catalyzes the enolization of 2,3-diketo-5-methylthiopentyl-1-phosphate (DK-MTP-1-P) into the intermediate 2-hydroxy-3-keto-5-methylthiopentenyl-1-phosphate (HK-MTPenyl-1-P), which is then dephosphorylated to form the acireductone 1,2-dihydroxy-3-keto-5-methylthiopentene (DHK-MTPene). The chain is Enolase-phosphatase E1 from Drosophila pseudoobscura pseudoobscura (Fruit fly).